Reading from the N-terminus, the 62-residue chain is UPF0337 protein mll8179 (62 aa).

Residues 1-42 are disordered; that stretch reads MRNMVNKDQVAGLAKQLKGSVKQAAGKATGNRRTQAEGMADK.

The protein belongs to the UPF0337 (CsbD) family.

This is UPF0337 protein mll8179 from Mesorhizobium japonicum (strain LMG 29417 / CECT 9101 / MAFF 303099) (Mesorhizobium loti (strain MAFF 303099)).